The chain runs to 264 residues: THAP domain-containing protein 10 (264 aa).

The THAP-type zinc-finger motif lies at 1 to 90; sequence MPARCVAAHC…LVAGAVPTLH (90 aa). 2 disordered regions span residues 90–136 and 160–195; these read HRVP…PRAG and TQPHADNPSNTVTSVPTHCEEGPVHKSTQISLKRPR. Residues 99 to 122 are compositionally biased toward basic and acidic residues; it reads GGEEGDQAGRPDTRGELQAARHSE. The segment covering 160-175 has biased composition (polar residues); sequence TQPHADNPSNTVTSVP.

The sequence is that of THAP domain-containing protein 10 (THAP10) from Pongo abelii (Sumatran orangutan).